The primary structure comprises 189 residues: Ras-like protein 1 (189 aa).

10 to 17 (GAGGVGKS) is a GTP binding site. Residues 32 to 40 (YDPTIEDSY) carry the Effector region motif. Residues 57–61 (DTAGQ) and 116–119 (NKCD) contribute to the GTP site. Cys-186 bears the Cysteine methyl ester mark. The S-geranylgeranyl cysteine moiety is linked to residue Cys-186. Residues 187 to 189 (KML) constitute a propeptide, removed in mature form.

It belongs to the small GTPase superfamily. Ras family.

It localises to the cell membrane. It catalyses the reaction GTP + H2O = GDP + phosphate + H(+). Alternates between an inactive form bound to GDP and an active form bound to GTP. Activated by a guanine nucleotide-exchange factor (GEF) and inactivated by a GTPase-activating protein (GAP). Ras proteins bind GDP/GTP and possess intrinsic GTPase activity. Plays a role in eye development by regulating cell growth, survival of postmitotic ommatidial cells and differentiation of photoreceptor cells. During larval development, mediates Ptth/tor signaling leading to the production of ecdysone, a hormone required for the initiation of metamorphosis. This is Ras-like protein 1 from Drosophila virilis (Fruit fly).